Here is a 131-residue protein sequence, read N- to C-terminus: Hyastatin (131 aa).

Residues 1–16 (MRVLLILVSLAALAHA) form the signal peptide. 3 disulfide bridges follow: Cys103/Cys117, Cys107/Cys124, and Cys118/Cys125. A Lysine amide modification is found at Lys130.

Strongly expressed in hemocytes, with weaker expression in gills and epidermis. Expressed at low levels in hepatopancreas.

It is found in the cytoplasmic granule. Its function is as follows. Antimicrobial peptide. Has strong antibacterial activity against the Gram-positive bacterium C.glutamicum (MIC=0.4 uM) and the Gram-negative bacterium E.coli (MIC=12.5 uM). Has weak antibacterial activity against the Gram-positive bacterium S.aureus (MIC&gt;50 uM) and the Gram-negative bacterium P.aeruginosa (MIC&gt;50 uM). Has antifungal activity against S.cerevisiae (MIC=12.5) and C.albicans (MIC=6.3 uM). Has weak antifungal activity against the mold B.cinerea. Presents chitin-binding activity. The chain is Hyastatin from Hyas araneus (Atlantic lyre crab).